We begin with the raw amino-acid sequence, 64 residues long: Alpha-mammal toxin Lqq5 (64 aa).

The LCN-type CS-alpha/beta domain occupies 2–64; it reads KDGYIVDDKN…VSIKEKGRCN (63 aa). Cystine bridges form between Cys12–Cys63, Cys16–Cys36, Cys22–Cys46, and Cys26–Cys48. The residue at position 64 (Asn64) is an Asparagine amide.

It belongs to the long (4 C-C) scorpion toxin superfamily. Sodium channel inhibitor family. Alpha subfamily. Expressed by the venom gland.

The protein resides in the secreted. Alpha toxins bind voltage-independently at site-3 of sodium channels (Nav) and inhibit the inactivation of the activated channels, thereby blocking neuronal transmission. Is active on mammals and bind with high affinity to rat brain synaptosome. Does not display phospholipid-binding activity. This chain is Alpha-mammal toxin Lqq5, found in Leiurus quinquestriatus quinquestriatus (Egyptian scorpion).